A 648-amino-acid polypeptide reads, in one-letter code: Phosphomethylpyrimidine synthase (648 aa).

Substrate-binding positions include asparagine 253, methionine 282, tyrosine 311, histidine 347, 367-369 (SRG), 408-411 (DGLR), and glutamate 447. Histidine 451 is a binding site for Zn(2+). Tyrosine 474 lines the substrate pocket. Histidine 515 serves as a coordination point for Zn(2+). Residues cysteine 595, cysteine 598, and cysteine 603 each contribute to the [4Fe-4S] cluster site.

The protein belongs to the ThiC family. Homodimer. [4Fe-4S] cluster is required as a cofactor.

The catalysed reaction is 5-amino-1-(5-phospho-beta-D-ribosyl)imidazole + S-adenosyl-L-methionine = 4-amino-2-methyl-5-(phosphooxymethyl)pyrimidine + CO + 5'-deoxyadenosine + formate + L-methionine + 3 H(+). The protein operates within cofactor biosynthesis; thiamine diphosphate biosynthesis. In terms of biological role, catalyzes the synthesis of the hydroxymethylpyrimidine phosphate (HMP-P) moiety of thiamine from aminoimidazole ribotide (AIR) in a radical S-adenosyl-L-methionine (SAM)-dependent reaction. The protein is Phosphomethylpyrimidine synthase of Burkholderia thailandensis (strain ATCC 700388 / DSM 13276 / CCUG 48851 / CIP 106301 / E264).